The sequence spans 365 residues: Chorismate synthase (365 aa).

NADP(+) is bound at residue arginine 46. Residues arginine 123–serine 125, asparagine 241–glycine 242, glycine 281, lysine 296–serine 300, and arginine 322 contribute to the FMN site.

The protein belongs to the chorismate synthase family. As to quaternary structure, homotetramer. It depends on FMNH2 as a cofactor.

It catalyses the reaction 5-O-(1-carboxyvinyl)-3-phosphoshikimate = chorismate + phosphate. It functions in the pathway metabolic intermediate biosynthesis; chorismate biosynthesis; chorismate from D-erythrose 4-phosphate and phosphoenolpyruvate: step 7/7. Functionally, catalyzes the anti-1,4-elimination of the C-3 phosphate and the C-6 proR hydrogen from 5-enolpyruvylshikimate-3-phosphate (EPSP) to yield chorismate, which is the branch point compound that serves as the starting substrate for the three terminal pathways of aromatic amino acid biosynthesis. This reaction introduces a second double bond into the aromatic ring system. The sequence is that of Chorismate synthase from Helicobacter pylori (strain HPAG1).